The primary structure comprises 597 residues: Probable translation initiation factor IF-2 (597 aa).

The 218-residue stretch at 4–221 folds into the tr-type G domain; sequence IRQPIIAVLG…LISGLAQKYL (218 aa). Residues 13 to 20 form a G1 region; that stretch reads GHVDHGKT. 13–20 provides a ligand contact to GTP; the sequence is GHVDHGKT. Residues 38-42 form a G2 region; sequence GITQH. The tract at residues 77–80 is G3; sequence DTPG. GTP-binding positions include 77 to 81 and 131 to 134; these read DTPGH and NKID. Residues 131–134 are G4; it reads NKID. Positions 199–201 are G5; it reads SAK.

It belongs to the TRAFAC class translation factor GTPase superfamily. Classic translation factor GTPase family. IF-2 subfamily.

In terms of biological role, function in general translation initiation by promoting the binding of the formylmethionine-tRNA to ribosomes. Seems to function along with eIF-2. The sequence is that of Probable translation initiation factor IF-2 from Thermococcus sibiricus (strain DSM 12597 / MM 739).